Consider the following 349-residue polypeptide: Cyclic amide hydrolase (349 aa).

Residues 1–90 are RU A; that stretch reads MTSPEDTAGV…AVFVDDPASS (90 aa). Arginine 38 lines the substrate pocket. An RU B region spans residues 99 to 231; sequence GLSIGVTTTA…AAVLVMGNSP (133 aa). Residue lysine 149 is part of the active site. Substrate is bound by residues arginine 176, 214–215, lysine 311, and 330–331; these read SA and SG. Residue serine 214 is the Nucleophile of the active site. Residues 237 to 349 form an RU C region; it reads YRIGHGVLRD…GGGTVAVIAR (113 aa).

It belongs to the cyclic amide hydrolase (CyAH) family. As to quaternary structure, homotetramer.

In terms of biological role, cyclic amide hydrolase of unknown substrate specificity. Catalyzes the hydrolytic ring-opening of a cyclic amide. Does not act on cyanuric acid nor barbituric acid. This Rhodococcus sp protein is Cyclic amide hydrolase.